The chain runs to 103 residues: Large ribosomal subunit protein bL21 (103 aa).

This sequence belongs to the bacterial ribosomal protein bL21 family. Part of the 50S ribosomal subunit. Contacts protein L20.

Functionally, this protein binds to 23S rRNA in the presence of protein L20. This is Large ribosomal subunit protein bL21 from Haemophilus influenzae (strain ATCC 51907 / DSM 11121 / KW20 / Rd).